The following is a 547-amino-acid chain: Elongator complex protein 3 (547 aa).

A Radical SAM core domain is found at 82 to 372; that stretch reads RTASGIAVVA…YRVQRDIPMP (291 aa). Cys-99, Cys-109, and Cys-112 together coordinate [4Fe-4S] cluster. Ser-161 bears the Phosphoserine mark. Lys-164 provides a ligand contact to acetyl-CoA. Tyr-202 carries the phosphotyrosine modification. Lys-229 carries the post-translational modification N6-methyllysine. Tyr-251 carries the post-translational modification Phosphotyrosine. The N-acetyltransferase domain maps to 396–547; it reads IQCRDVRTRE…QGPYMVKTLE (152 aa). Acetyl-CoA-binding positions include 474-477, 497-499, and Tyr-530; these read ELHV and FGM.

Belongs to the ELP3 family. As to quaternary structure, component of the elongator complex which consists of ELP1, ELP2, ELP3, ELP4, ELP5 and ELP6. ELP1, ELP2 and ELP3 form the elongator core complex. Interacts with alpha-tubulin. It depends on [4Fe-4S] cluster as a cofactor. Tyrosine-phosphorylated; phosphorylation on Tyr-202 does not affect elongator complex integrity or ELP3 protein stability. Also serine/threonine-phosphorylated.

It is found in the cytoplasm. The protein resides in the nucleus. It catalyses the reaction uridine(34) in tRNA + acetyl-CoA + S-adenosyl-L-methionine + H2O = 5-(carboxymethyl)uridine(34) in tRNA + 5'-deoxyadenosine + L-methionine + CoA + 2 H(+). The protein operates within tRNA modification; 5-methoxycarbonylmethyl-2-thiouridine-tRNA biosynthesis. In terms of biological role, catalytic tRNA acetyltransferase subunit of the elongator complex which is required for multiple tRNA modifications, including mcm5U (5-methoxycarbonylmethyl uridine), mcm5s2U (5-methoxycarbonylmethyl-2-thiouridine), and ncm5U (5-carbamoylmethyl uridine). In the elongator complex, acts as a tRNA uridine(34) acetyltransferase by mediating formation of carboxymethyluridine in the wobble base at position 34 in tRNAs. May also act as a protein lysine acetyltransferase by mediating acetylation of target proteins; such activity is however unclear in vivo and recent evidences suggest that ELP3 primarily acts as a tRNA acetyltransferase. Involved in neurogenesis: regulates the migration and branching of projection neurons in the developing cerebral cortex, through a process depending on alpha-tubulin acetylation. Required for acetylation of GJA1 in the developing cerebral cortex. The sequence is that of Elongator complex protein 3 from Bos taurus (Bovine).